Consider the following 115-residue polypeptide: Ribosome-binding factor A (115 aa).

This sequence belongs to the RbfA family. In terms of assembly, monomer. Binds 30S ribosomal subunits, but not 50S ribosomal subunits or 70S ribosomes.

The protein localises to the cytoplasm. One of several proteins that assist in the late maturation steps of the functional core of the 30S ribosomal subunit. Associates with free 30S ribosomal subunits (but not with 30S subunits that are part of 70S ribosomes or polysomes). Required for efficient processing of 16S rRNA. May interact with the 5'-terminal helix region of 16S rRNA. The chain is Ribosome-binding factor A from Staphylococcus carnosus (strain TM300).